A 598-amino-acid chain; its full sequence is MRVKKRNVRGNAKNFITRSQAVRKLQISLADFRRLCIFKGIYPREPKNKKKANKGSTAPTTFYYAKDIQYLMHEPVLAKFREHKTFARKLTRALGRGEVSSAKKLEENRSTYKLDHIIKERYPSFPDAVRDIDDALNMLFLFANLPATNQISSRVIRDAQVICNQWLAYVAKERLIRKVFVSIKGIYYQANVKGEEVRWVIPFKFPENIPSDIDFRIMMTFLEFYSTLLHFVLFKLYTDSGLVYPPKIDVEQDKILSGINAYILESQEETSVLNAEVPSDAPDKEAQSIDTKTLAQAMKADSKDKDDNSNDEAPENVEDVELDEFEDHNKNKGDILAQPSKFSSPTATLFEDFVFYVGREVPIEAIEFLILSCGGKVISEAAMDQIEGNTEFDLSKVTHQIVDRPVLKHKVAGRTYIQPQWVFDCINKGELLSANLYLPGVSLPPHLSPWGDALGYDPTKEVESEDESSDSSEESDSEIENEEEDTKPAAITNEDDDEDVEELAAQKELELEASGIAYSKAKDEGLHDDVASKKKRKVTDEDEEEKKLKMIMMSNKQRKLYKKMKYSNQQKEDKIEELKKKKKQLAKKEKTLKKVEKK.

The interval 296-317 (QAMKADSKDKDDNSNDEAPENV) is disordered. Positions 345-439 (PTATLFEDFV…ELLSANLYLP (95 aa)) constitute a BRCT domain. Disordered regions lie at residues 452–501 (DALG…EDVE), 515–544 (GIAY…EDEE), and 564–598 (MKYS…VEKK). Acidic residues predominate over residues 463–485 (ESEDESSDSSEESDSEIENEEED). Composition is skewed to basic and acidic residues over residues 520 to 532 (KAKD…DVAS), 570 to 579 (QKEDKIEELK), and 586 to 598 (AKKE…VEKK). Positions 557-598 (QRKLYKKMKYSNQQKEDKIEELKKKKKQLAKKEKTLKKVEKK) form a coiled coil.

It belongs to the pescadillo family. As to quaternary structure, component of the NOP7 complex, composed of ERB1, NOP7 and YTM1. The complex is held together by ERB1, which interacts with NOP7 via its N-terminal domain and with YTM1 via a high-affinity interaction between the seven-bladed beta-propeller domains of the 2 proteins. The NOP7 complex associates with the 66S pre-ribosome.

The protein localises to the nucleus. It localises to the nucleolus. It is found in the nucleoplasm. Component of the NOP7 complex, which is required for maturation of the 25S and 5.8S ribosomal RNAs and formation of the 60S ribosome. This chain is Pescadillo homolog, found in Candida glabrata (strain ATCC 2001 / BCRC 20586 / JCM 3761 / NBRC 0622 / NRRL Y-65 / CBS 138) (Yeast).